The sequence spans 295 residues: 4-hydroxy-tetrahydrodipicolinate synthase (295 aa).

Residue Thr47 coordinates pyruvate. Residue Tyr135 is the Proton donor/acceptor of the active site. Residue Lys163 is the Schiff-base intermediate with substrate of the active site. Position 206 (Ile206) interacts with pyruvate.

The protein belongs to the DapA family. Homodimer.

Its subcellular location is the cytoplasm. The enzyme catalyses L-aspartate 4-semialdehyde + pyruvate = (2S,4S)-4-hydroxy-2,3,4,5-tetrahydrodipicolinate + H2O + H(+). It functions in the pathway amino-acid biosynthesis; L-lysine biosynthesis via DAP pathway; (S)-tetrahydrodipicolinate from L-aspartate: step 3/4. Catalyzes the condensation of (S)-aspartate-beta-semialdehyde [(S)-ASA] and pyruvate to 4-hydroxy-tetrahydrodipicolinate (HTPA). This chain is 4-hydroxy-tetrahydrodipicolinate synthase, found in Staphylococcus aureus (strain Mu50 / ATCC 700699).